A 76-amino-acid chain; its full sequence is MKADIHPQYHLIKVVMTDGTEFQTRSTYGEEGATLNLDIDPKTHPAWTGGTQQLLDRGGRLSRFNSRFGNLSFGKK.

Belongs to the bacterial ribosomal protein bL31 family. Type A subfamily. In terms of assembly, part of the 50S ribosomal subunit.

Binds the 23S rRNA. The protein is Large ribosomal subunit protein bL31 of Beijerinckia indica subsp. indica (strain ATCC 9039 / DSM 1715 / NCIMB 8712).